The following is a 653-amino-acid chain: Hepatocyte growth factor activator serine protease (653 aa).

The N-terminal stretch at Met1 to Pro34 is a signal peptide. The tract at residues Pro34–Leu98 is disordered. The propeptide at Gln35 to Arg369 is removed in mature form. N-linked (GlcNAc...) asparagine glycosylation is found at Asn39, Asn47, and Asn63. Over residues Asn47–Val59 the composition is skewed to low complexity. In terms of domain architecture, Fibronectin type-II spans Glu100 to Glu147. Cystine bridges form between Cys105/Cys130, Cys119/Cys145, Cys161/Cys172, Cys166/Cys183, Cys185/Cys194, Cys199/Cys227, Cys225/Cys234, Cys242/Cys253, Cys247/Cys264, Cys266/Cys275, Cys283/Cys364, Cys304/Cys346, Cys335/Cys359, Cys392/Cys519, Cys430/Cys446, Cys438/Cys508, Cys533/Cys602, Cys565/Cys581, and Cys592/Cys620. Residues Ile157–Gly195 form the EGF-like 1 domain. Residues Glu197–Thr237 enclose the Fibronectin type-I domain. The EGF-like 2 domain maps to His238–Asn276. In terms of domain architecture, Kringle spans Cys283–Cys364. Asn287 is a glycosylation site (N-linked (GlcNAc...) asparagine). Residues Ile406–Arg644 enclose the Peptidase S1 domain. His445 serves as the catalytic Charge relay system. Asn466 carries N-linked (GlcNAc...) asparagine glycosylation. Residue Asp495 is the Charge relay system of the active site. Asn544 carries N-linked (GlcNAc...) asparagine glycosylation. The active-site Charge relay system is the Ser596.

Belongs to the peptidase S1 family. As to quaternary structure, heterodimer of a short chain and a long chain linked by a disulfide bond. In terms of processing, the active form of HGFAC presents in the serum is derived from the COOH-terminal region of the precursor by the cleavage of bonds between Arg-369 and Val-370 and Arg-405 and Ile-406.

It localises to the secreted. Its function is as follows. Serine protease that hydrolyzes the inactive zymogen hepatocyte growth factor (HGFsc) to an activated disulfide-linked heterodimer, then initiating hepatocyte growth factor receptor signaling pathway. The chain is Hepatocyte growth factor activator serine protease from Mus musculus (Mouse).